A 404-amino-acid chain; its full sequence is Lysophospholipid transporter LplT (404 aa).

12 helical membrane passes run 16 to 36, 53 to 73, 91 to 111, 139 to 159, 164 to 184, 195 to 213, 227 to 247, 253 to 273, 285 to 305, 310 to 330, 350 to 370, and 372 to 392; these read MIAVLCAQFFSAFGDNALLFA, ILQMAFVATYIVLAPFVGQFA, AGALVICFGFNPFLGYSLVGV, MMEASTIAAILLGSVAGGVLA, GVALGVCALVYAIAVVANMFI, SWRPRAMTGSFFTACLVLW, LFWGAGVTLRFLLVLWVPIAL, ATPTLLNAMVAIGIVVGAGAA, CLPAGVLIGVAVAIFALQHSM, LLLIIIGILGGFFVVPLNALL, GENTAMLLMLGLFSVVVKLGV, and VIAVGVGFGVIFALAIALLWG.

Belongs to the major facilitator superfamily. LplT (TC 2.A.1.42) family.

The protein resides in the cell inner membrane. Catalyzes the facilitated diffusion of 2-acyl-glycero-3-phosphoethanolamine (2-acyl-GPE) into the cell. This Yersinia enterocolitica serotype O:8 / biotype 1B (strain NCTC 13174 / 8081) protein is Lysophospholipid transporter LplT.